The sequence spans 836 residues: Hypoxia-inducible factor 1-alpha (836 aa).

A disordered region spans residues 1 to 30 (MEGAGGENEKKKMSSERRKEKSRDAARSRR). Residues 1 to 401 (MEGAGGENEK…KEPDALTLLA (401 aa)) are interaction with TSGA10. Basic and acidic residues predominate over residues 7 to 30 (ENEKKKMSSERRKEKSRDAARSRR). The 54-residue stretch at 17–70 (RRKEKSRDAARSRRSKESEVFYELAHQLPLPHNVSSHLDKASVMRLTISYLRVR) folds into the bHLH domain. Residues 21–30 (KSRDAARSRR) form a DNA-binding region. In terms of domain architecture, PAS 1 spans 80-155 (SEDEMKAQMD…EMLTHRNGPV (76 aa)). Residues 170 to 191 (RMKCTLTSRGRTMNIKSATWKV) are required for heterodimer formation with ARNT. Residues 228-298 (PHPSNIEIPL…KTHHDMFTKG (71 aa)) form the PAS 2 domain. Serine 247 bears the Phosphoserine; by CK1 mark. Positions 302–345 (TGQYRMLAKRGGYVWVETQATVIYNTKNSQPQCIVCVNYVVSGI) constitute a PAC domain. The interval 380-417 (SEDTSCLFDKLKKEPDALTLLAPAAGDTIISLDFGSDD) is N-terminal VHL recognition site. Lysine 391 is covalently cross-linked (Glycyl lysine isopeptide (Lys-Gly) (interchain with G-Cter in SUMO)). An ODD region spans residues 401 to 613 (APAAGDTIIS…PSMSTVTGFQ (213 aa)). Proline 402 is subject to 4-hydroxyproline. Lysine 476 participates in a covalent cross-link: Glycyl lysine isopeptide (Lys-Gly) (interchain with G-Cter in SUMO). Residues 492–511 (QIQDQPASPSDGSTRQSSPE) are disordered. Positions 544–588 (FKLELVEKLFAEDTEAKNPFSTQDTDLDLEMLAPYIPMDDDFQLR) are NTAD. Lysine 545 bears the N6-acetyllysine; alternate mark. Residues lysine 545, lysine 551, and lysine 560 each participate in a glycyl lysine isopeptide (Lys-Gly) (interchain with G-Cter in ubiquitin) cross-link. A Glycyl lysine isopeptide (Lys-Gly) (interchain with G-Cter in ubiquitin); alternate cross-link involves residue lysine 545. Serine 564 bears the Phosphoserine; by GSK3-beta mark. Residue threonine 568 is modified to Phosphothreonine; by GSK3-beta. The segment at 569-585 (DLDLEMLAPYIPMDDDF) is C-terminal VHL recognition site. Position 577 is a 4-hydroxyproline (proline 577). Phosphoserine; by PLK3 is present on serine 589. The ID stretch occupies residues 589–795 (SFDQLSPLES…SDLACRLLGQ (207 aa)). Disordered regions lie at residues 593 to 684 (LSPL…DRAG) and 707 to 734 (QRNT…KMEH). Phosphoserine; by GSK3-beta is present on serine 602. Over residues 608-620 (TVTGFQQTQLQKP) the composition is skewed to polar residues. Positions 621–632 (TITATATTTATT) are enriched in low complexity. Residues 633 to 647 (DESKTETKDNKEDIK) show a composition bias toward basic and acidic residues. Over residues 652-678 (SPSSTQVPQETTTAKASAYSGTHSRTA) the composition is skewed to polar residues. Serine 668 carries the post-translational modification Phosphoserine; by PLK3. Position 719 is an N6-acetyllysine (lysine 719). The short motif at 728–731 (RKRK) is the Nuclear localization signal element. The tract at residues 796 to 836 (SMDESGLPQLTSYDCEVNAPIQGSRNLLQGEELLRALDQVN) is CTAD. Cysteine 810 carries the post-translational modification S-nitrosocysteine. (3S)-3-hydroxyasparagine is present on asparagine 813.

In terms of assembly, interacts with the ARNT; forms a heterodimer that binds core DNA sequence 5'-TACGTG-3' within the hypoxia response element (HRE) of target gene promoters. Interacts with COPS5; the interaction increases the transcriptional activity of HIF1A through increased stability. Interacts with EP300 (via TAZ-type 1 domains); the interaction is stimulated in response to hypoxia and inhibited by CITED2. Interacts with CREBBP (via TAZ-type 1 domains). Interacts with NCOA1, NCOA2, APEX1 and HSP90. Interacts (hydroxylated within the ODD domain) with VHLL (via beta domain); the interaction, leads to polyubiquitination and subsequent HIF1A proteasomal degradation. During hypoxia, sumoylated HIF1A also binds VHL; the interaction promotes the ubiquitination of HIF1A. Interacts with SENP1; the interaction desumoylates HIF1A resulting in stabilization and activation of transcription. Interacts (via the ODD domain) with NAA10; the interaction appears not to acetylate HIF1A nor have any affect on protein stability, during hypoxia. Interacts with RWDD3; the interaction enhances HIF1A sumoylation. Interacts with TSGA10. Interacts with HIF3A. Interacts with RORA (via the DNA binding domain); the interaction enhances HIF1A transcription under hypoxia through increasing protein stability. Interaction with PSMA7 inhibits the transactivation activity of HIF1A under both normoxic and hypoxia-mimicking conditions. Interacts with USP20. Interacts with RACK1; promotes HIF1A ubiquitination and proteasome-mediated degradation. Interacts (via N-terminus) with USP19. Interacts with SIRT2. Interacts (deacetylated form) with EGLN1. Interacts with CBFA2T3. Interacts with HSP90AA1 and HSP90AB1. Interacts with DCUN1D1; this interaction increases the interaction between VHL and DCUN1D1. Interacts with HIF1AN. S-nitrosylation of Cys-810 may be responsible for increased recruitment of p300 coactivator necessary for transcriptional activity of HIF-1 complex. In terms of processing, requires phosphorylation for DNA-binding. Phosphorylation at Ser-247 by CSNK1D/CK1 represses kinase activity and impairs ARNT binding. Phosphorylation by GSK3-beta and PLK3 promote degradation by the proteasome. Post-translationally, sumoylated; with SUMO1 under hypoxia. Sumoylation is enhanced through interaction with RWDD3. Both sumoylation and desumoylation seem to be involved in the regulation of its stability during hypoxia. Sumoylation can promote either its stabilization or its VHL-dependent degradation by promoting hydroxyproline-independent HIF1A-VHL complex binding, thus leading to HIF1A ubiquitination and proteasomal degradation. Desumoylation by SENP1 increases its stability amd transcriptional activity. There is a disaccord between various publications on the effect of sumoylation and desumoylation on its stability and transcriptional activity. Acetylation of Lys-545 by ARD1 increases interaction with VHL and stimulates subsequent proteasomal degradation. Deacetylation of Lys-719 by SIRT2 increases its interaction with and hydroxylation by EGLN1 thereby inactivating HIF1A activity by inducing its proteasomal degradation. In terms of processing, ubiquitinated; in normoxia, following hydroxylation and interaction with VHL. Lys-545 appears to be the principal site of ubiquitination. Clioquinol, the Cu/Zn-chelator, inhibits ubiquitination through preventing hydroxylation at Asn-813. Ubiquitinated by E3 ligase VHL. Deubiquitinated by UCHL1. Post-translationally, the iron and 2-oxoglutarate dependent 3-hydroxylation of asparagine is (S) stereospecific within HIF CTAD domains. In normoxia, is hydroxylated on Pro-402 and Pro-577 in the oxygen-dependent degradation domain (ODD) by EGLN1/PHD2 and EGLN2/PHD1. EGLN3/PHD3 has also been shown to hydroxylate Pro-577. The hydroxylated prolines promote interaction with VHL, initiating rapid ubiquitination and subsequent proteasomal degradation. Deubiquitinated by USP20. Under hypoxia, proline hydroxylation is impaired and ubiquitination is attenuated, resulting in stabilization. In normoxia, is hydroxylated on Asn-813 by HIF1AN, thus abrogating interaction with CREBBP and EP300 and preventing transcriptional activation. Repressed by iron ion, via Fe(2+) prolyl hydroxylase (PHD) enzymes-mediated hydroxylation and subsequent proteasomal degradation. As to expression, ubiquitous.

It localises to the cytoplasm. The protein resides in the nucleus. Its subcellular location is the nucleus speckle. Induced by reactive oxygen species (ROS). Functionally, functions as a master transcriptional regulator of the adaptive response to hypoxia. Under hypoxic conditions, activates the transcription of over 40 genes, including erythropoietin, glucose transporters, glycolytic enzymes, vascular endothelial growth factor, HILPDA, and other genes whose protein products increase oxygen delivery or facilitate metabolic adaptation to hypoxia. Plays an essential role in embryonic vascularization, tumor angiogenesis and pathophysiology of ischemic disease. Heterodimerizes with ARNT; heterodimer binds to core DNA sequence 5'-TACGTG-3' within the hypoxia response element (HRE) of target gene promoters. Activation requires recruitment of transcriptional coactivators such as CREBBP and EP300. Activity is enhanced by interaction with NCOA1 and/or NCOA2. Interaction with redox regulatory protein APEX1 seems to activate CTAD and potentiates activation by NCOA1 and CREBBP. Involved in the axonal distribution and transport of mitochondria in neurons during hypoxia. The polypeptide is Hypoxia-inducible factor 1-alpha (Hif1a) (Mus musculus (Mouse)).